Reading from the N-terminus, the 393-residue chain is Protein TsgA (393 aa).

Transmembrane regions (helical) follow at residues 11 to 31 (WISF…GMVM), 51 to 71 (FLNA…EIVP), 78 to 98 (FGFL…SLAL), 101 to 121 (TAMF…TFLI), 140 to 160 (FFSM…AHSI), 162 to 182 (WYWV…LTFG), 206 to 226 (IGVL…LGFI), 245 to 265 (TLVS…SFIL), 273 to 293 (ILTV…TGTP), 297 to 317 (AWSI…IITL), 332 to 352 (FVLT…GPIV), and 361 to 381 (LLTA…LGFV).

It belongs to the major facilitator superfamily. TsgA family.

The protein localises to the cell inner membrane. The protein is Protein TsgA of Shigella boydii serotype 18 (strain CDC 3083-94 / BS512).